The following is a 430-amino-acid chain: tRNA(Ile)-lysidine synthase (430 aa).

Ser21–Ser26 lines the ATP pocket.

Belongs to the tRNA(Ile)-lysidine synthase family.

Its subcellular location is the cytoplasm. The catalysed reaction is cytidine(34) in tRNA(Ile2) + L-lysine + ATP = lysidine(34) in tRNA(Ile2) + AMP + diphosphate + H(+). Functionally, ligates lysine onto the cytidine present at position 34 of the AUA codon-specific tRNA(Ile) that contains the anticodon CAU, in an ATP-dependent manner. Cytidine is converted to lysidine, thus changing the amino acid specificity of the tRNA from methionine to isoleucine. The polypeptide is tRNA(Ile)-lysidine synthase (Salmonella paratyphi B (strain ATCC BAA-1250 / SPB7)).